Consider the following 145-residue polypeptide: D-aminoacyl-tRNA deacylase (145 aa).

Residues 137-138 (GP) carry the Gly-cisPro motif, important for rejection of L-amino acids motif.

It belongs to the DTD family. Homodimer.

Its subcellular location is the cytoplasm. The catalysed reaction is glycyl-tRNA(Ala) + H2O = tRNA(Ala) + glycine + H(+). The enzyme catalyses a D-aminoacyl-tRNA + H2O = a tRNA + a D-alpha-amino acid + H(+). Its function is as follows. An aminoacyl-tRNA editing enzyme that deacylates mischarged D-aminoacyl-tRNAs. Also deacylates mischarged glycyl-tRNA(Ala), protecting cells against glycine mischarging by AlaRS. Acts via tRNA-based rather than protein-based catalysis; rejects L-amino acids rather than detecting D-amino acids in the active site. By recycling D-aminoacyl-tRNA to D-amino acids and free tRNA molecules, this enzyme counteracts the toxicity associated with the formation of D-aminoacyl-tRNA entities in vivo and helps enforce protein L-homochirality. The polypeptide is D-aminoacyl-tRNA deacylase (Streptomyces avermitilis (strain ATCC 31267 / DSM 46492 / JCM 5070 / NBRC 14893 / NCIMB 12804 / NRRL 8165 / MA-4680)).